A 400-amino-acid polypeptide reads, in one-letter code: Trans-enoyl reductase ucsL (400 aa).

NADP(+) is bound at residue 50–53 (TDHK). Substrate is bound at residue 145 to 152 (SVHGSVAL). NADP(+) contacts are provided by residues 204-207 (STAC), 227-230 (SPRN), Y245, and 292-293 (LE). 313–317 (GPVMF) contributes to the substrate binding site. 389–390 (VS) serves as a coordination point for NADP(+).

The protein belongs to the zinc-containing alcohol dehydrogenase family. In terms of assembly, monomer.

It participates in mycotoxin biosynthesis. In terms of biological role, trans-enoyl reductase; part of the gene cluster that mediates the biosynthesis of UCS1025A, a member of the pyrrolizidinone family that acts as a strong telomerase inhibitor and displays potent antibacterial and antitumor properties. These compounds share a hemiaminal-containing pyrrolizidinone core fused with a gamma-lactone, giving a furopyrrolizidine that is connected to a decalin fragment. The polyketide synthase module (PKS) of the PKS-NRPS ucsA is responsible for the synthesis of the polyketide backbone via the condensation of an acetyl-CoA starter unit with 6 malonyl-CoA units. The downstream nonribosomal peptide synthetase (NRPS) module then amidates the carboxyl end of the polyketide with a 2S,3S-methylproline derived from L-isoleucine by the 2-oxoglutarate-dependent dioxygenase ucsF which converts L-isoleucine to (4S,5S)-4-methylpyrroline-5-carboxylate that is further converted to 2S,3S-methylproline by the pyrroline-5-carboxylate reductase ucsG. Reductive release of the completed aminoacyl polyketide from the assembly line can form the 3-pyrrolin-2-one structure via an intramolecular Knoevenagel reaction. Because ucsA lacks a designated enoylreductase (ER) domain, the required activity is provided the enoyl reductase ucsL. This keto acyclic precursor is the substrate of the Diels-Alderase ucsH, that catalyzes the Diels-Alder cycloaddition. Oxidation of the 3S-methyl group to a carboxylate by the cytochrome P450 monooxygenase ucsK allows an oxa-Michael cyclization that might involve the reductase/dehydrogenase ucsI and which furnishes the furopyrrolizidine. The oxidase ucsJ likely plays a critical role in stereoselective reduction of the C5-C6 double bond to afford the required R-configured carboxylate group. Further enolization and oxidation at C5 by an unidentified enzyme affords the last intermediate that can undergo oxa-Michael cyclization to yield UCS1025A. The chain is Trans-enoyl reductase ucsL from Acremonium sp.